The primary structure comprises 158 residues: Transcription elongation factor GreA (158 aa).

Positions 47–74 (AEYHAAKEEQSHNEGRINELEDKLARAD) form a coiled coil.

Belongs to the GreA/GreB family.

Its function is as follows. Necessary for efficient RNA polymerase transcription elongation past template-encoded arresting sites. The arresting sites in DNA have the property of trapping a certain fraction of elongating RNA polymerases that pass through, resulting in locked ternary complexes. Cleavage of the nascent transcript by cleavage factors such as GreA or GreB allows the resumption of elongation from the new 3'terminus. GreA releases sequences of 2 to 3 nucleotides. The polypeptide is Transcription elongation factor GreA (Rhodopseudomonas palustris (strain ATCC BAA-98 / CGA009)).